We begin with the raw amino-acid sequence, 2581 residues long: Chromodomain-helicase-DNA-binding protein 8 (2581 aa).

5 disordered regions span residues 22–114 (DDSF…QTST), 253–283 (VKGS…TQGE), 349–392 (QKIQ…SPGQ), 429–582 (ALSS…QVKR), and 596–615 (DEEE…PILP). Composition is skewed to polar residues over residues 42–51 (SLDSLDQMNQ) and 94–114 (DYTT…QTST). Positions 255–267 (GSAPAGNPGATGP) are enriched in low complexity. A compositionally biased stretch (pro residues) spans 355-370 (PQPPSSQPQPQQPPST). Serine 432 bears the Phosphoserine mark. Composition is skewed to basic and acidic residues over residues 445–462 (GMEE…EKAN) and 493–516 (RPEE…EEKP). Residues serine 553 and serine 562 each carry the phosphoserine modification. Positions 572–582 (QKRRSNRQVKR) are enriched in basic residues. Residue lysine 609 forms a Glycyl lysine isopeptide (Lys-Gly) (interchain with G-Cter in SUMO) linkage. 2 Chromo domains span residues 642–709 (AIVD…AQMR) and 724–790 (VEVD…RVNR). A Helicase ATP-binding domain is found at 823 to 997 (LFNWYNRQNC…FSLLHFLEPS (175 aa)). 836–843 (DEMGLGKT) contributes to the ATP binding site. Positions 948-951 (DEAH) match the DEAH box motif. In terms of domain architecture, Helicase C-terminal spans 1137 to 1288 (LIDKLLPKLK…KAVLQSMSGR (152 aa)). A phosphoserine mark is found at serine 1420 and serine 1424. A disordered region spans residues 1692–1712 (EDPEYKPLQGPPKDQDDEGDP). The segment at 1789–2302 (IARREKQQRW…LVELEVECME (514 aa)) is interaction with FAM124B. Serine 1976 and serine 1978 each carry phosphoserine. The disordered stretch occupies residues 1991–2116 (SRTASPLPLR…TDQSRSKLYD (126 aa)). Residue threonine 1993 is modified to Phosphothreonine. Phosphoserine is present on residues serine 1995 and serine 2008. The segment covering 2011-2021 (ETATQVPSLES) has biased composition (polar residues). A Glycyl lysine isopeptide (Lys-Gly) (interchain with G-Cter in SUMO2) cross-link involves residue lysine 2025. Serine 2046 is subject to Phosphoserine. Phosphothreonine is present on threonine 2051. Over residues 2064–2073 (EDEDDSDSEL) the composition is skewed to acidic residues. Residues serine 2069 and serine 2071 each carry the phosphoserine modification. A compositionally biased stretch (low complexity) spans 2076-2095 (SKLSPSSSSSSSSSSSSSST). The span at 2103–2116 (EEKLTDQSRSKLYD) shows a compositional bias: basic and acidic residues. Serine 2182, serine 2200, and serine 2202 each carry phosphoserine. A disordered region spans residues 2189-2229 (GILGPGNHLLDSPSLTPGEYGDSPVPTPRSSSAASMAEEEA). Threonine 2204 carries the post-translational modification Phosphothreonine. Serine 2211 bears the Phosphoserine mark. Threonine 2215 is subject to Phosphothreonine. The span at 2218 to 2229 (SSSAASMAEEEA) shows a compositional bias: low complexity. Phosphoserine is present on serine 2223. Residue lysine 2256 forms a Glycyl lysine isopeptide (Lys-Gly) (interchain with G-Cter in SUMO2) linkage. The disordered stretch occupies residues 2481–2581 (PSSPHVDSST…NSDSSEDADD (101 aa)). Over residues 2492–2510 (LHHHHHHPHPHHHHHHHPG) the composition is skewed to basic residues. Position 2519 is a phosphoserine (serine 2519). The segment covering 2519–2528 (SPVTTASGTT) has biased composition (polar residues). A compositionally biased stretch (acidic residues) spans 2536-2550 (PEEDDDEDEEDDDDL).

This sequence belongs to the SNF2/RAD54 helicase family. CHD8 subfamily. In terms of assembly, interacts with p53/TP53, histone H1, CTNNB1, CTCF and PIAS3. Component of some MLL1/MLL complex, at least composed of the core components KMT2A/MLL1, ASH2L, HCFC1/HCF1, WDR5 and RBBP5, as well as the facultative components BACC1, CHD8, E2F6, HSP70, INO80C, KANSL1, LAS1L, MAX, MCRS1, MGA, KAT8/MOF, PELP1, PHF20, PRP31, RING2, RUVB1/TIP49A, RUVB2/TIP49B, SENP3, TAF1, TAF4, TAF6, TAF7, TAF9 and TEX10. Interacts with CHD7. Interacts with FAM124B. Interacts with TLK2. Interacts with HNRNPL in an RNA-dependent manner. In terms of processing, sumoylated.

Its subcellular location is the nucleus. The enzyme catalyses ATP + H2O = ADP + phosphate + H(+). ATP-dependent chromatin-remodeling factor, it slides nucleosomes along DNA; nucleosome sliding requires ATP. Acts as a transcription repressor by remodeling chromatin structure and recruiting histone H1 to target genes. Suppresses p53/TP53-mediated apoptosis by recruiting histone H1 and preventing p53/TP53 transactivation activity. Acts as a negative regulator of Wnt signaling pathway by regulating beta-catenin (CTNNB1) activity. Negatively regulates CTNNB1-targeted gene expression by being recruited specifically to the promoter regions of several CTNNB1 responsive genes. Involved in both enhancer blocking and epigenetic remodeling at chromatin boundary via its interaction with CTCF. Acts as a suppressor of STAT3 activity by suppressing the LIF-induced STAT3 transcriptional activity. Also acts as a transcription activator via its interaction with ZNF143 by participating in efficient U6 RNA polymerase III transcription. Regulates alternative splicing of a core group of genes involved in neuronal differentiation, cell cycle and DNA repair. Enables H3K36me3-coupled transcription elongation and co-transcriptional RNA processing likely via interaction with HNRNPL. In Homo sapiens (Human), this protein is Chromodomain-helicase-DNA-binding protein 8.